Reading from the N-terminus, the 437-residue chain is Serine carboxypeptidase-like 10 (437 aa).

The N-terminal stretch at 1-21 (MGSTLKHLLLLLLVLIRHVDS) is a signal peptide. Cystine bridges form between C80–C327, C243–C257, and C281–C293. N101 is a glycosylation site (N-linked (GlcNAc...) asparagine). S175 is a catalytic residue. N-linked (GlcNAc...) asparagine glycosylation occurs at N328. D362 is a catalytic residue. N378 carries N-linked (GlcNAc...) asparagine glycosylation. H415 is an active-site residue. The N-linked (GlcNAc...) asparagine glycan is linked to N422.

It belongs to the peptidase S10 family. In terms of tissue distribution, expressed in senescent leaves.

It is found in the secreted. Functionally, involved in the biosynthesis of sinapoylated anthocyanins. The sequence is that of Serine carboxypeptidase-like 10 (SCPL10) from Arabidopsis thaliana (Mouse-ear cress).